Here is a 209-residue protein sequence, read N- to C-terminus: UPF0502 protein PSHAa0076 (209 aa).

The protein belongs to the UPF0502 family.

The protein is UPF0502 protein PSHAa0076 of Pseudoalteromonas translucida (strain TAC 125).